We begin with the raw amino-acid sequence, 1160 residues long: Pesticidal crystal protein Cry8Ca (1160 aa).

The protein belongs to the delta endotoxin family.

Promotes colloidosmotic lysis by binding to the midgut epithelial cells of insects. Active on various scarabaeid beetles such as Anomala cuprea, A.rufocuprea and Popillia japonica. This Bacillus thuringiensis subsp. japonensis protein is Pesticidal crystal protein Cry8Ca (cry8Ca).